Reading from the N-terminus, the 455-residue chain is Peroxisomal membrane protein PEX3 (455 aa).

Polar residues predominate over residues 113–125 (TVLSDDFSTSQEG). The tract at residues 113–135 (TVLSDDFSTSQEGAISEDTNKPP) is disordered. The helical transmembrane segment at 155–171 (FLTLIYCESLLIVFLHL) threads the bilayer.

This sequence belongs to the peroxin-3 family. Component of the peroxisomal docking complex, composed of at least PEX3, PEX13, PEX14 and PEX17. Component of the peroxisomal translocation complex, composed of at least PEX3, PEX2, PEX10 and PEX12. Interacts with PEX19. Interacts with the pexophagy receptor ATG30.

Its subcellular location is the peroxisome membrane. Functionally, peroxisomal membrane protein required for peroxisome biosynthesis. Shared component of both the peroxisomal docking complex and the peroxisomal translocation complex. The two types of peroxisomal matrix targeting signals, PTS1 and PTS2, are first recognized in the cytosol by their receptors PEX5 and PEX7, respectively, which then carry the cargo to the peroxisomal membrane. The peroxisomal targeting signal (PTS) receptor-cargo complexes interact with peroxisomal membrane protein (PMP) components of the docking complex. They have then additional downstream interactions with the translocation complex, leading to the transport of fully folded and oligomerized cargo into the peroxisome matrix. PEX3 acts as an anchoring site for PEX19 on the peroxisomal membrane and thus plays a crucial role in the assembly of the peroxisomal translocation complex. Is also essential for the interaction between the two complexes. Finally. PEX3 activates selective autophagy of peroxisomes (pexophagy) via interaction with the pexophagy receptor ATG30. The chain is Peroxisomal membrane protein PEX3 from Komagataella pastoris (Yeast).